The primary structure comprises 326 residues: N-acetyl-gamma-glutamyl-phosphate reductase (326 aa).

The active site involves Cys155.

The protein belongs to the NAGSA dehydrogenase family. Type 1 subfamily.

The protein localises to the cytoplasm. The catalysed reaction is N-acetyl-L-glutamate 5-semialdehyde + phosphate + NADP(+) = N-acetyl-L-glutamyl 5-phosphate + NADPH + H(+). It functions in the pathway amino-acid biosynthesis; L-arginine biosynthesis; N(2)-acetyl-L-ornithine from L-glutamate: step 3/4. Its function is as follows. Catalyzes the NADPH-dependent reduction of N-acetyl-5-glutamyl phosphate to yield N-acetyl-L-glutamate 5-semialdehyde. The polypeptide is N-acetyl-gamma-glutamyl-phosphate reductase (Shewanella woodyi (strain ATCC 51908 / MS32)).